Reading from the N-terminus, the 192-residue chain is Large ribosomal subunit protein uL5 (192 aa).

The protein belongs to the universal ribosomal protein uL5 family. In terms of assembly, part of the 50S ribosomal subunit; part of the 5S rRNA/L5/L18/L25 subcomplex. Contacts the 5S rRNA and the P site tRNA. Forms a bridge to the 30S subunit in the 70S ribosome.

Its function is as follows. This is one of the proteins that bind and probably mediate the attachment of the 5S RNA into the large ribosomal subunit, where it forms part of the central protuberance. In the 70S ribosome it contacts protein S13 of the 30S subunit (bridge B1b), connecting the 2 subunits; this bridge is implicated in subunit movement. Contacts the P site tRNA; the 5S rRNA and some of its associated proteins might help stabilize positioning of ribosome-bound tRNAs. In Sphingopyxis alaskensis (strain DSM 13593 / LMG 18877 / RB2256) (Sphingomonas alaskensis), this protein is Large ribosomal subunit protein uL5.